Here is a 413-residue protein sequence, read N- to C-terminus: CinA-like protein (413 aa).

The protein belongs to the CinA family.

The chain is CinA-like protein from Geobacter sulfurreducens (strain ATCC 51573 / DSM 12127 / PCA).